Consider the following 127-residue polypeptide: Major sperm protein 55/57 (127 aa).

Alanine 2 is subject to N-acetylalanine. The MSP domain occupies 9–126 (DIQTQPGTKI…RRKNLPIEYN (118 aa)).

Sperm.

It is found in the cell projection. It localises to the pseudopodium. The protein localises to the cytoplasm. Its subcellular location is the cytoskeleton. Its function is as follows. Central component in molecular interactions underlying sperm crawling. Forms an extensive filament system that extends from sperm villipoda, along the leading edge of the pseudopod. The polypeptide is Major sperm protein 55/57 (msp-55) (Caenorhabditis elegans).